A 933-amino-acid chain; its full sequence is Valine--tRNA ligase (933 aa).

The interval 1–24 (MIERVKTTKLSEASGLPKTYDPVG) is disordered. Positions 57 to 67 (PNVTGSLHMGH) match the 'HIGH' region motif. The 'KMSKS' region motif lies at 557–561 (KMSKS). An ATP-binding site is contributed by K560. Residues 866–932 (LIDIASLRSR…RLVKERLMGL (67 aa)) adopt a coiled-coil conformation.

Belongs to the class-I aminoacyl-tRNA synthetase family. ValS type 1 subfamily. As to quaternary structure, monomer.

It localises to the cytoplasm. The enzyme catalyses tRNA(Val) + L-valine + ATP = L-valyl-tRNA(Val) + AMP + diphosphate. In terms of biological role, catalyzes the attachment of valine to tRNA(Val). As ValRS can inadvertently accommodate and process structurally similar amino acids such as threonine, to avoid such errors, it has a 'posttransfer' editing activity that hydrolyzes mischarged Thr-tRNA(Val) in a tRNA-dependent manner. This chain is Valine--tRNA ligase, found in Prochlorococcus marinus (strain NATL2A).